We begin with the raw amino-acid sequence, 508 residues long: WD repeat-containing protein DDB_G0290555 (508 aa).

WD repeat units follow at residues 32–74, 159–198, 252–292, and 295–334; these read TSEL…LIGE, NVAT…KTYS, FSKH…QVGS, and DSAG…MLHK. Positions 368–508 are disordered; it reads ENKNRINNDD…KKFAGLKKRK (141 aa). The span at 399 to 435 shows a compositional bias: acidic residues; sequence MDSDDDIEDGDDNDVEFPMEADSDDSDFDLGNSDDDN. The segment covering 436-446 has biased composition (basic and acidic residues); the sequence is ISVKKENKGDS. The span at 447-456 shows a compositional bias: acidic residues; that stretch reads DDSDDDSDED. The segment covering 471 to 493 has biased composition (low complexity); the sequence is NNNNNNNKGKNNKGKNNSSTKKT. Over residues 497–508 the composition is skewed to basic residues; it reads LKKKFAGLKKRK.

The sequence is that of WD repeat-containing protein DDB_G0290555 from Dictyostelium discoideum (Social amoeba).